Here is a 514-residue protein sequence, read N- to C-terminus: 2,3-bisphosphoglycerate-independent phosphoglycerate mutase (514 aa).

2 residues coordinate Mn(2+): Asp-13 and Ser-69. Catalysis depends on Ser-69, which acts as the Phosphoserine intermediate. Substrate contacts are provided by residues His-128, 158–159 (RD), Arg-189, Arg-195, 263–266 (RADR), and Lys-336. The Mn(2+) site is built by Asp-402, His-406, Asp-443, His-444, and His-461.

Belongs to the BPG-independent phosphoglycerate mutase family. In terms of assembly, monomer. Mn(2+) is required as a cofactor.

It catalyses the reaction (2R)-2-phosphoglycerate = (2R)-3-phosphoglycerate. Its pathway is carbohydrate degradation; glycolysis; pyruvate from D-glyceraldehyde 3-phosphate: step 3/5. Functionally, catalyzes the interconversion of 2-phosphoglycerate and 3-phosphoglycerate. This chain is 2,3-bisphosphoglycerate-independent phosphoglycerate mutase, found in Akkermansia muciniphila (strain ATCC BAA-835 / DSM 22959 / JCM 33894 / BCRC 81048 / CCUG 64013 / CIP 107961 / Muc).